Consider the following 325-residue polypeptide: Zinc finger C2HC domain-containing protein 1A (325 aa).

Residues 15 to 44 (ELLPCKICGRTFFPVALKKHGPICQKTATK) form a C2HC/C3H-type 1 zinc finger. Positions 19, 22, 34, and 38 each coordinate Zn(2+). Residues 43–83 (TKKRKTFDSSRQRAEGTDIPTVKPLKPRPEPPKKPSNWRRK) form a disordered region. Positions 48–58 (TFDSSRQRAEG) are enriched in basic and acidic residues. The C2HC/C3H-type 2 zinc finger occupies 118-147 (DYIQCPYCQRRFNENAADRHINFCKEQAAR). Zn(2+) is bound by residues cysteine 122, cysteine 125, histidine 137, and cysteine 141. Residues 150-260 (NKGKFSTDTK…NPAPGVLTNK (111 aa)) are disordered. Low complexity-rich tracts occupy residues 177–188 (SNSPGTASSGSS) and 197–216 (GKTVVGVPSGKVSSSSSSLG). A Phosphoserine modification is found at serine 223. Threonine 244 is subject to Phosphothreonine. Serine 292 bears the Phosphoserine mark.

It belongs to the ZC2HC1 family. Zn(2+) is required as a cofactor.

The sequence is that of Zinc finger C2HC domain-containing protein 1A (ZC2HC1A) from Homo sapiens (Human).